We begin with the raw amino-acid sequence, 338 residues long: NADPH dehydrogenase (338 aa).

Residue 22–25 (SPMC) participates in FMN binding. Tyrosine 27 serves as a coordination point for substrate. FMN contacts are provided by alanine 59 and glutamine 101. Residue 163 to 166 (HAAH) participates in substrate binding. Residues arginine 214 and 306–307 (GR) each bind FMN.

The protein belongs to the NADH:flavin oxidoreductase/NADH oxidase family. NamA subfamily. In terms of assembly, homotetramer. The cofactor is FMN.

The catalysed reaction is A + NADPH + H(+) = AH2 + NADP(+). Its function is as follows. Catalyzes the reduction of the double bond of an array of alpha,beta-unsaturated aldehydes and ketones. It also reduces the nitro group of nitroester and nitroaromatic compounds. It could have a role in detoxification processes. The sequence is that of NADPH dehydrogenase from Listeria monocytogenes serovar 1/2a (strain ATCC BAA-679 / EGD-e).